The chain runs to 649 residues: Protein mitoshell (649 aa).

A compositionally biased stretch (basic and acidic residues) spans 167-176 (LRSEARKPRP). Disordered stretches follow at residues 167 to 193 (LRSE…ESGA), 389 to 414 (HGPS…EPTS), and 485 to 512 (ALPS…VRSY). Residues 177 to 191 (ESVVPEESSISSLES) show a composition bias toward low complexity. Polar residues-rich tracts occupy residues 393 to 414 (AFST…EPTS) and 485 to 503 (ALPS…SPQS).

Functionally, required for male meiotic cytokinesis through its involvement in the regulation of mitochondrial aggregation and fusion, astral spindle assembly and contractile ring formation. The sequence is that of Protein mitoshell from Drosophila melanogaster (Fruit fly).